Consider the following 329-residue polypeptide: Peroxidase 17 (329 aa).

A signal peptide spans 1–19 (MSLLPHLILYLTLLTVVVT). 4 disulfide bridges follow: Cys32–Cys112, Cys65–Cys70, Cys118–Cys315, and Cys197–Cys229. His63 serves as the catalytic Proton acceptor. The Ca(2+) site is built by Asp64, Val67, Gly69, Asp71, and Ser73. Pro160 lines the substrate pocket. 2 N-linked (GlcNAc...) asparagine glycosylation sites follow: Asn165 and Asn177. A heme b-binding site is contributed by His190. Ser191 contacts Ca(2+). Residues Asn206 and Asn236 are each glycosylated (N-linked (GlcNAc...) asparagine). Asp242, Thr244, and Asp249 together coordinate Ca(2+).

This sequence belongs to the peroxidase family. Classical plant (class III) peroxidase subfamily. It depends on heme b as a cofactor. The cofactor is Ca(2+).

It localises to the secreted. The protein localises to the vacuole. The enzyme catalyses 2 a phenolic donor + H2O2 = 2 a phenolic radical donor + 2 H2O. Removal of H(2)O(2), oxidation of toxic reductants, biosynthesis and degradation of lignin, suberization, auxin catabolism, response to environmental stresses such as wounding, pathogen attack and oxidative stress. These functions might be dependent on each isozyme/isoform in each plant tissue. This Arabidopsis thaliana (Mouse-ear cress) protein is Peroxidase 17 (PER17).